We begin with the raw amino-acid sequence, 364 residues long: Nucleoporin SEH1 (364 aa).

WD repeat units follow at residues 10-49, 55-96, 111-152, 160-210, 217-258, and 276-315; these read DHKD…EWHC, THSG…SNDK, DSRT…NLSQ, SCKL…RKYA, TVTD…RESA, and SHNS…NWKC.

Belongs to the WD repeat SEC13 family. Component of the Nup107-160 subcomplex of the nuclear pore complex (NPC). The Nup107-160 subcomplex includes NUP160, NUP133, NUP107, NUP98, NUP85, NUP43, NUP37, SEH1 and SEC13. Component of the GATOR2 subcomplex, composed of MIOS, SEC13, SEH1L, WDR24 and WDR59. The GATOR2 complex interacts with CASTOR1 and CASTOR2; the interaction is negatively regulated by arginine. The GATOR2 complex interacts with SESN1, SESN2 and SESN3; the interaction is negatively regulated by amino acids.

Its subcellular location is the chromosome. It is found in the centromere. The protein resides in the kinetochore. It localises to the nucleus. The protein localises to the nuclear pore complex. Its subcellular location is the lysosome membrane. The GATOR2 complex is negatively regulated by the upstream amino acid sensors CASTOR1 and SESN2, which sequester the GATOR2 complex in absence of amino acids. In the presence of abundant amino acids, GATOR2 is released from CASTOR1 and SESN2 and activated. Component of the Nup107-160 subcomplex of the nuclear pore complex (NPC). The Nup107-160 subcomplex is required for the assembly of a functional NPC. The Nup107-160 subcomplex is also required for normal kinetochore microtubule attachment, mitotic progression and chromosome segregation. This subunit plays a role in recruitment of the Nup107-160 subcomplex to the kinetochore. Its function is as follows. As a component of the GATOR2 complex, functions as an activator of the amino acid-sensing branch of the mTORC1 signaling pathway. The GATOR2 complex indirectly activates mTORC1 through the inhibition of the GATOR1 subcomplex. GATOR2 probably acts as an E3 ubiquitin-protein ligase toward GATOR1. In the presence of abundant amino acids, the GATOR2 complex mediates ubiquitination of the NPRL2 core component of the GATOR1 complex, leading to GATOR1 inactivation. In the absence of amino acids, GATOR2 is inhibited, activating the GATOR1 complex. This chain is Nucleoporin SEH1 (seh1l), found in Danio rerio (Zebrafish).